Reading from the N-terminus, the 92-residue chain is Protein S100-B (92 aa).

Ser2 carries the blocked amino end (Ser); alternate modification. Residue Ser2 is modified to N-acetylserine; alternate. EF-hand domains lie at 13–48 and 49–84; these read DVFH…LEEI and KEQE…VTTA. A Zn(2+)-binding site is contributed by His16. Ser19, Glu22, and Asp24 together coordinate Ca(2+). Position 26 (His26) interacts with Zn(2+). Ca(2+) contacts are provided by Lys27, Glu32, Asp62, Asp64, Asp66, Glu68, and Glu73. Positions 86 and 91 each coordinate Zn(2+).

It belongs to the S-100 family. Dimer of either two alpha chains, or two beta chains, or one alpha and one beta chain. The S100B dimer binds two molecules of STK38. Interacts with CACYBP in a calcium-dependent manner. Interacts with ATAD3A; this interaction probably occurs in the cytosol prior to ATAD3A mitochondrial targeting. Interacts with S100A6. The S100B dimer interacts with two molecules of CAPZA1. Interacts with AGER. Interacts with PPP5C (via TPR repeats); the interaction is calcium-dependent and modulates PPP5C activity. Interacts with TPPP; this interaction inhibits TPPP dimerization. Interacts with isoform CLSTN3beta of CLSTN3; interaction promotes secretion. In terms of tissue distribution, although predominant among the water-soluble brain proteins, S100 is also found in a variety of other tissues.

The protein localises to the cytoplasm. It localises to the nucleus. The protein resides in the secreted. Functionally, small zinc- and- and calcium-binding protein that is highly expressed in astrocytes and constitutes one of the most abundant soluble proteins in brain. Weakly binds calcium but binds zinc very tightly-distinct binding sites with different affinities exist for both ions on each monomer. Physiological concentrations of potassium ion antagonize the binding of both divalent cations, especially affecting high-affinity calcium-binding sites. Acts as a neurotrophic factor that promotes astrocytosis and axonal proliferation. Involved in innervation of thermogenic adipose tissue by acting as an adipocyte-derived neurotrophic factor that promotes sympathetic innervation of adipose tissue. Binds to and initiates the activation of STK38 by releasing autoinhibitory intramolecular interactions within the kinase. Interaction with AGER after myocardial infarction may play a role in myocyte apoptosis by activating ERK1/2 and p53/TP53 signaling. Could assist ATAD3A cytoplasmic processing, preventing aggregation and favoring mitochondrial localization. May mediate calcium-dependent regulation on many physiological processes by interacting with other proteins, such as TPR-containing proteins, and modulating their activity. This is Protein S100-B from Homo sapiens (Human).